A 285-amino-acid chain; its full sequence is MTNKPLYDQDSTLKNLSLGKITEYKSSYDPTLLQAVPRSLNRNELQLSEHNLPFYGVDLWNIYELSWLNSKGKPVVATGVVKVPFDSKNLIESKSFKLYLNSFNQSKFVSIEAVQKVLTADLSHCADKAVSVELHTDLDNFSDKLGTFSGQCLDVLDIEIDNYQLNADYLQDLSSQEQVTETLYSHLLKSNCLITSQPDWASIEISYTGKKLDREKLLRYLISFRQHNEFHEQCVERIYCDIMKFGQIDSLCVYARYTRRGGLDINPLRTTEHINEINNLRLLRQ.

Ile91–Ser93 contacts substrate. Ser93–Lys94 is an NADPH binding site. Residue Cys192 is the Thioimide intermediate of the active site. Asp199 (proton donor) is an active-site residue. Residue His231 to Glu232 coordinates substrate. NADPH is bound at residue Arg260–Gly261.

Belongs to the GTP cyclohydrolase I family. QueF type 2 subfamily. In terms of assembly, homodimer.

The protein resides in the cytoplasm. The catalysed reaction is 7-aminomethyl-7-carbaguanine + 2 NADP(+) = 7-cyano-7-deazaguanine + 2 NADPH + 3 H(+). The protein operates within tRNA modification; tRNA-queuosine biosynthesis. Catalyzes the NADPH-dependent reduction of 7-cyano-7-deazaguanine (preQ0) to 7-aminomethyl-7-deazaguanine (preQ1). In Psychromonas ingrahamii (strain DSM 17664 / CCUG 51855 / 37), this protein is NADPH-dependent 7-cyano-7-deazaguanine reductase.